The primary structure comprises 729 residues: Catalase-peroxidase (729 aa).

The segment at 1–24 is disordered; the sequence is MDAKTNDGKAGQCPFTSGRGHKNR. Positions 95–217 form a cross-link, tryptophyl-tyrosyl-methioninium (Trp-Tyr) (with M-243); the sequence is WHSAGTYRIT…LAAVQMGLIY (123 aa). The active-site Proton acceptor is the His96. A cross-link (tryptophyl-tyrosyl-methioninium (Tyr-Met) (with W-95)) is located at residues 217 to 243; sequence YVNPEGPNGQPDPLAAAKDIRETFLRM. His258 contacts heme b.

The protein belongs to the peroxidase family. Peroxidase/catalase subfamily. As to quaternary structure, homodimer or homotetramer. Heme b is required as a cofactor. In terms of processing, formation of the three residue Trp-Tyr-Met cross-link is important for the catalase, but not the peroxidase activity of the enzyme.

The enzyme catalyses H2O2 + AH2 = A + 2 H2O. It catalyses the reaction 2 H2O2 = O2 + 2 H2O. Functionally, bifunctional enzyme with both catalase and broad-spectrum peroxidase activity. The protein is Catalase-peroxidase of Nitrobacter winogradskyi (strain ATCC 25391 / DSM 10237 / CIP 104748 / NCIMB 11846 / Nb-255).